The primary structure comprises 232 residues: 2-C-methyl-D-erythritol 4-phosphate cytidylyltransferase (232 aa).

It belongs to the IspD/TarI cytidylyltransferase family. IspD subfamily.

It carries out the reaction 2-C-methyl-D-erythritol 4-phosphate + CTP + H(+) = 4-CDP-2-C-methyl-D-erythritol + diphosphate. It functions in the pathway isoprenoid biosynthesis; isopentenyl diphosphate biosynthesis via DXP pathway; isopentenyl diphosphate from 1-deoxy-D-xylulose 5-phosphate: step 2/6. Catalyzes the formation of 4-diphosphocytidyl-2-C-methyl-D-erythritol from CTP and 2-C-methyl-D-erythritol 4-phosphate (MEP). This is 2-C-methyl-D-erythritol 4-phosphate cytidylyltransferase from Geobacter metallireducens (strain ATCC 53774 / DSM 7210 / GS-15).